A 933-amino-acid chain; its full sequence is uncharacterized protein (933 aa).

Positions 1–28 (MNGNLPHIQIQSPKNSLDHLNNGRQATH) are enriched in polar residues. Disordered stretches follow at residues 1–135 (MNGN…GESD), 173–194 (MDNE…NAAD), and 252–275 (ATDF…ADAQ). The span at 29 to 47 (NFEHGKPGDREEANGHADA) shows a compositional bias: basic and acidic residues. Positions 49 to 59 (SSSGRSRYLSS) are enriched in low complexity. Polar residues-rich tracts occupy residues 87-101 (TLSF…SNTH) and 108-135 (NRSS…GESD). Over residues 173-182 (MDNESSEEER) the composition is skewed to acidic residues. Polar residues predominate over residues 264–275 (EPSSSRHTADAQ). 8 WD repeats span residues 314 to 353 (SSNN…HARS), 385 to 423 (GHTA…CLCC), 425 to 465 (EHSD…VSFW), 467 to 506 (ELPE…FRTQ), 517 to 563 (AKGS…LELK), 568 to 607 (ANAQ…MHKT), 617 to 657 (ASVR…SVIS), and 665 to 710 (PSLR…AARK). A Phosphoserine modification is found at Ser-722. The tract at residues 756-796 (NASQITNNENNGNDDIKKGDEPEEEHVGLRKNSTQEKNANL) is disordered. Polar residues predominate over residues 757 to 768 (ASQITNNENNGN). Residues 769-783 (DDIKKGDEPEEEHVG) show a composition bias toward basic and acidic residues.

It localises to the endoplasmic reticulum. Its subcellular location is the nucleus. This is an uncharacterized protein from Schizosaccharomyces pombe (strain 972 / ATCC 24843) (Fission yeast).